We begin with the raw amino-acid sequence, 187 residues long: Ribosome maturation factor RimM (187 aa).

A PRC barrel domain is found at 111 to 187 (KDEYYWVDLI…RILVDWQADF (77 aa)).

Belongs to the RimM family. Binds ribosomal protein uS19.

It localises to the cytoplasm. Functionally, an accessory protein needed during the final step in the assembly of 30S ribosomal subunit, possibly for assembly of the head region. Essential for efficient processing of 16S rRNA. May be needed both before and after RbfA during the maturation of 16S rRNA. It has affinity for free ribosomal 30S subunits but not for 70S ribosomes. The polypeptide is Ribosome maturation factor RimM (Albidiferax ferrireducens (strain ATCC BAA-621 / DSM 15236 / T118) (Rhodoferax ferrireducens)).